Reading from the N-terminus, the 258-residue chain is Large ribosomal subunit protein bL21 (258 aa).

Residues K140–K159 are compositionally biased toward basic and acidic residues. The disordered stretch occupies residues K140–A181.

This sequence belongs to the bacterial ribosomal protein bL21 family. As to quaternary structure, part of the 50S ribosomal subunit. Contacts protein L20.

In terms of biological role, this protein binds to 23S rRNA in the presence of protein L20. The protein is Large ribosomal subunit protein bL21 of Jannaschia sp. (strain CCS1).